A 348-amino-acid polypeptide reads, in one-letter code: Galanin receptor type 1 (348 aa).

The Extracellular portion of the chain corresponds to 1 to 34 (MELAMVNLSEGNGSDPEPPAPESRPLFGIGVENF). N-linked (GlcNAc...) asparagine glycosylation is found at Asn7 and Asn12. A helical membrane pass occupies residues 35–55 (ITLVVFGLIFAMGVLGNSLVI). Over 56 to 70 (TVLARSKPGKPRSTT) the chain is Cytoplasmic. A helical transmembrane segment spans residues 71 to 91 (NLFILNLSIADLAYLLFCIPF). Over 92-109 (QATVYALPTWVLGAFICK) the chain is Extracellular. A disulfide bridge connects residues Cys108 and Cys186. Residues 110–131 (FIHYFFTVSMLVSIFTLAAMSV) traverse the membrane as a helical segment. Residues 132 to 151 (DRYVAIVHSRRSSSLRVSRN) are Cytoplasmic-facing. A helical membrane pass occupies residues 152-172 (ALLGVGFIWALSIAMASPVAY). Topologically, residues 173 to 197 (HQRLFHRDSNQTFCWEQWPNKLHKK) are extracellular. An N-linked (GlcNAc...) asparagine glycan is attached at Asn182. A helical membrane pass occupies residues 198 to 218 (AYVVCTFVFGYLLPLLLICFC). Over 219 to 247 (YAKVLNHLHKKLKNMSKKSEASKKKTAQT) the chain is Cytoplasmic. Residues 248–268 (VLVVVVVFGISWLPHHVVHLW) form a helical membrane-spanning segment. Residues 269–270 (AE) lie on the Extracellular side of the membrane. Residues 271–291 (FGAFPLTPASFFFRITAHCLA) traverse the membrane as a helical segment. The Cytoplasmic portion of the chain corresponds to 292–348 (YSNSSVNPIIYAFLSENFRKAYKQVFKCHVCDESPRSETKENKSRMDTPPSTNCTHV). Cys319 is lipidated: S-palmitoyl cysteine. Residues 328 to 337 (SETKENKSRM) are compositionally biased toward basic and acidic residues. A disordered region spans residues 328 to 348 (SETKENKSRMDTPPSTNCTHV).

This sequence belongs to the G-protein coupled receptor 1 family. In terms of assembly, interacts with GRP39 AND HTR1A. Three cysteine residues are found in the C-terminus, at least one of which may be palmitoylated. In terms of tissue distribution, expression is detected in brain, spinal cord, heart and skeletal muscle.

The protein localises to the cell membrane. In terms of biological role, receptor for the hormone galanin. The activity of this receptor is mediated by G proteins that inhibit adenylate cyclase activity. This chain is Galanin receptor type 1 (Galr1), found in Mus musculus (Mouse).